The following is a 339-amino-acid chain: MYNVAIVGASGYTGGELLRMLLNHSEVEVNNITSRKYDGTPAHKIHPHIRDSGLVFKNKQPSELDADIIFTATPHGASMKIVPDLLETGTKVIDLSGDYRYRDTKVYEKWYGLEHTSDIKGVYGLPEIYRDEIKKADLVGNPGCFPTGAILSSYPLVDNDLVDRIVIDSKTGVSGAGVNPSSTTHYPNIADNVNPYKISSHRHVSEIQQELHGFEDVKVSFTPHLVPVIRGIQTTSHSFLREEHSDITPDELRKFYEKTYGKEYFIKLMDDGEIPHLSSVRGSNFVHIGGFEIDDTGRIVMLSCIDNLVRGASGQAIQNMNIMLGLDETTGLNHFGLNP.

Cys-144 is a catalytic residue.

This sequence belongs to the NAGSA dehydrogenase family. Type 1 subfamily.

The protein localises to the cytoplasm. It carries out the reaction N-acetyl-L-glutamate 5-semialdehyde + phosphate + NADP(+) = N-acetyl-L-glutamyl 5-phosphate + NADPH + H(+). Its pathway is amino-acid biosynthesis; L-arginine biosynthesis; N(2)-acetyl-L-ornithine from L-glutamate: step 3/4. Its function is as follows. Catalyzes the NADPH-dependent reduction of N-acetyl-5-glutamyl phosphate to yield N-acetyl-L-glutamate 5-semialdehyde. In Methanobrevibacter smithii (strain ATCC 35061 / DSM 861 / OCM 144 / PS), this protein is N-acetyl-gamma-glutamyl-phosphate reductase.